We begin with the raw amino-acid sequence, 235 residues long: MIVKRPYKNLGFADHGWLQARHHFSFARYFDPDRINWGAVRVWNDDRIAPDTGFGMHPHKDMEIVTYIREGALTHEDSLGNKGRIEAGDVQVMSAGTGIVHSEYNREASDTRLFQIWIMPNQSGHKPSWGSRSFPKKDHAGRFVVLASGYPEDKEALPIHADAAVLGATLNKGDVINYPLEEQRYGYLVVSKGIIAIENCTLQEGDAAGLAEVETISIEAKEDSEIVMVVTGAKI.

Residues histidine 57, histidine 59, histidine 101, and glutamate 103 each coordinate a divalent metal cation.

The protein belongs to the pirin family. It depends on a divalent metal cation as a cofactor.

It catalyses the reaction quercetin + O2 = 2-(3,4-dihydroxybenzoyloxy)-4,6-dihydroxybenzoate + CO. Its pathway is flavonoid metabolism; quercetin degradation. In terms of biological role, putative quercetin 2,3-dioxygenase. The sequence is that of Putative quercetin 2,3-dioxygenase ZMO1337 from Zymomonas mobilis subsp. mobilis (strain ATCC 31821 / ZM4 / CP4).